Reading from the N-terminus, the 230-residue chain is Cytidylate kinase (230 aa).

Residue 12 to 20 (GPSGTGKST) participates in ATP binding.

The protein belongs to the cytidylate kinase family. Type 1 subfamily.

Its subcellular location is the cytoplasm. It carries out the reaction CMP + ATP = CDP + ADP. The enzyme catalyses dCMP + ATP = dCDP + ADP. The protein is Cytidylate kinase of Corynebacterium efficiens (strain DSM 44549 / YS-314 / AJ 12310 / JCM 11189 / NBRC 100395).